Consider the following 467-residue polypeptide: tRNA modification GTPase MnmE (467 aa).

3 residues coordinate (6S)-5-formyl-5,6,7,8-tetrahydrofolate: R25, E87, and K130. The TrmE-type G domain maps to G226–G389. N236 provides a ligand contact to K(+). Residues N236–S241, T255–T261, and D280–G283 contribute to the GTP site. S240 contributes to the Mg(2+) binding site. T255, I257, and T260 together coordinate K(+). T261 lines the Mg(2+) pocket. A (6S)-5-formyl-5,6,7,8-tetrahydrofolate-binding site is contributed by K467.

It belongs to the TRAFAC class TrmE-Era-EngA-EngB-Septin-like GTPase superfamily. TrmE GTPase family. Homodimer. Heterotetramer of two MnmE and two MnmG subunits. Requires K(+) as cofactor.

Its subcellular location is the cytoplasm. In terms of biological role, exhibits a very high intrinsic GTPase hydrolysis rate. Involved in the addition of a carboxymethylaminomethyl (cmnm) group at the wobble position (U34) of certain tRNAs, forming tRNA-cmnm(5)s(2)U34. The polypeptide is tRNA modification GTPase MnmE (Burkholderia mallei (strain NCTC 10247)).